The chain runs to 372 residues: Glutamate 5-kinase (372 aa).

Lysine 14 lines the ATP pocket. Substrate contacts are provided by serine 54, aspartate 141, and asparagine 153. Residues 173 to 174 and 215 to 221 contribute to the ATP site; these read TD and TGGMATK. Residues 280-358 form the PUA domain; that stretch reads RGQLVIDAGA…DSIEEVLGYD (79 aa).

Belongs to the glutamate 5-kinase family.

It localises to the cytoplasm. It carries out the reaction L-glutamate + ATP = L-glutamyl 5-phosphate + ADP. It participates in amino-acid biosynthesis; L-proline biosynthesis; L-glutamate 5-semialdehyde from L-glutamate: step 1/2. Catalyzes the transfer of a phosphate group to glutamate to form L-glutamate 5-phosphate. This Shewanella pealeana (strain ATCC 700345 / ANG-SQ1) protein is Glutamate 5-kinase.